An 876-amino-acid chain; its full sequence is uncharacterized protein (876 aa).

Positions 37-48 (DEDKSNNDDRRS) are enriched in basic and acidic residues. Disordered regions lie at residues 37–67 (DEDKSNNDDRRSLASILDSSSSVKKKGKGSN), 112–155 (DESG…RNIK), 226–254 (KKKSSEGATPTIKFNPPIEDGFTPLTKSQ), and 330–353 (MMMDDSRSVSSARRSRSRSRSRSI). Phosphoserine is present on residues Ser48 and Ser51. Low complexity predominate over residues 49-58 (LASILDSSSS). The span at 115–131 (GFTSDNNADYFSGNSYS) shows a compositional bias: polar residues. Phosphoserine occurs at positions 360, 510, 552, and 577. Residues 490 to 513 (PEVTKQKNTSGPKPGFSHSKSADA) form a disordered region. Disordered regions lie at residues 661–728 (ITGG…RSPQ) and 750–876 (RHSL…FGRL). Residues 689–699 (SKSKSRSSSKS) show a composition bias toward basic residues. The segment covering 717–726 (SSASASRSRS) has biased composition (low complexity). Ser775 is subject to Phosphoserine. Low complexity-rich tracts occupy residues 794-808 (NKDSSLRKVSSSSSL) and 842-854 (FSFFKSKSRSPSS).

This is an uncharacterized protein from Saccharomyces cerevisiae (strain ATCC 204508 / S288c) (Baker's yeast).